Reading from the N-terminus, the 102-residue chain is Large ribosomal subunit protein bL21 (102 aa).

Belongs to the bacterial ribosomal protein bL21 family. As to quaternary structure, part of the 50S ribosomal subunit. Contacts protein L20.

This protein binds to 23S rRNA in the presence of protein L20. This is Large ribosomal subunit protein bL21 from Leptospira biflexa serovar Patoc (strain Patoc 1 / Ames).